The primary structure comprises 261 residues: Non-homologous end joining protein Ku 1 (261 aa).

Residues 12–171 (SFSLVAIPVQ…LITLHYSDEV (160 aa)) enclose the Ku domain.

Belongs to the prokaryotic Ku family. As to quaternary structure, homodimer. Interacts with LigD.

In terms of biological role, with LigD forms a non-homologous end joining (NHEJ) DNA repair enzyme, which repairs dsDNA breaks with reduced fidelity. Binds linear dsDNA with 5'- and 3'- overhangs but not closed circular dsDNA nor ssDNA. Recruits and stimulates the ligase activity of LigD. This Geotalea uraniireducens (strain Rf4) (Geobacter uraniireducens) protein is Non-homologous end joining protein Ku 1.